A 571-amino-acid polypeptide reads, in one-letter code: Proline--tRNA ligase (571 aa).

The protein belongs to the class-II aminoacyl-tRNA synthetase family. ProS type 1 subfamily. In terms of assembly, homodimer.

Its subcellular location is the cytoplasm. It carries out the reaction tRNA(Pro) + L-proline + ATP = L-prolyl-tRNA(Pro) + AMP + diphosphate. Functionally, catalyzes the attachment of proline to tRNA(Pro) in a two-step reaction: proline is first activated by ATP to form Pro-AMP and then transferred to the acceptor end of tRNA(Pro). As ProRS can inadvertently accommodate and process non-cognate amino acids such as alanine and cysteine, to avoid such errors it has two additional distinct editing activities against alanine. One activity is designated as 'pretransfer' editing and involves the tRNA(Pro)-independent hydrolysis of activated Ala-AMP. The other activity is designated 'posttransfer' editing and involves deacylation of mischarged Ala-tRNA(Pro). The misacylated Cys-tRNA(Pro) is not edited by ProRS. The chain is Proline--tRNA ligase from Aliivibrio fischeri (strain MJ11) (Vibrio fischeri).